The primary structure comprises 64 residues: UPF0370 protein YPA_2246 (64 aa).

A helical membrane pass occupies residues 3–23 (WLADYWWIILILLVGMILNGI). Residues 36–47 (DNKPELPPHRDN) are compositionally biased toward basic and acidic residues. The segment at 36–64 (DNKPELPPHRDNNAQWDDEDDWPDQNKKK) is disordered.

It belongs to the UPF0370 family.

Its subcellular location is the cell membrane. The sequence is that of UPF0370 protein YPA_2246 from Yersinia pestis bv. Antiqua (strain Antiqua).